A 249-amino-acid polypeptide reads, in one-letter code: Kallikrein-7 (249 aa).

An N-terminal signal peptide occupies residues 1–21 (MGVWLLSLITVLLSLALETAG). Residues 22 to 25 (QGER) constitute a propeptide, activation peptide. Residues 26–246 (IIDGYKCKEG…YKRWVMETMK (221 aa)) are serine protease. 6 disulfides stabilise this stretch: Cys32–Cys161, Cys51–Cys67, Cys133–Cys235, Cys140–Cys207, Cys172–Cys186, and Cys197–Cys222. Catalysis depends on charge relay system residues His66 and Asp108. Catalysis depends on Ser201, which acts as the Charge relay system.

The protein belongs to the peptidase S1 family. Kallikrein subfamily. As to expression, expressed in skin and, at lower levels, in lung, kidney, brain, heart and spleen. In skin, expressed in high suprabasal keratinocytes and in the luminal parts of hair follicles. Not detected in liver and skeletal muscle.

The protein localises to the secreted. It carries out the reaction Cleavage of proteins with aromatic side chains in the P1 position.. Inhibited by Zn2+ and Cu2+ at low micromolar concentrations. Inhibited by SERPINA12. Its function is as follows. May catalyze the degradation of intercellular cohesive structures in the cornified layer of the skin in the continuous shedding of cells from the skin surface. Specific for amino acid residues with aromatic side chains in the P1 position. Cleaves insulin A chain at '14-Tyr-|-Gln-15' and insulin B chain at '6-Leu-|-Cys-7', '16-Tyr-|-Leu-17', '25-Phe-|-Tyr-26' and '26-Tyr-|-Thr-27'. Could play a role in the activation of precursors to inflammatory cytokines. The sequence is that of Kallikrein-7 (Klk7) from Mus musculus (Mouse).